A 698-amino-acid polypeptide reads, in one-letter code: MDGLFAPIPSNPLIDFTILLLVTLILPPIFERLKLPGLVGLLFAGIVLGKSGLGVLNEDSESIKLFTDIGKIYLMFVAGLEIDMVDFRRTRNRSLLYGSLTFAVPLLTGLAVGLTFGYSFNASVLLGSLFASHTLLGYPIVQRLGIVRNQAVMVTIGATIFTDIAALLVLAICISIHSGSFSPAGLVVQLVAIAVYSALVLIGFDWAGREYFRRTGDEQSNQFLFVLLAVFLASVGSELINVDKIVGAFLAGLAVNDVLGNSPVKEKVEFLGTTLFIPFFFIGIGLLLDLPAFLVTLTTLFPLVVAIVVGLILSKGVAAILAQWKLGYTWVEGLTMWSLSIPQVAATLAAAVAGYQAVNAAGDRLVSETVLNTIIVLMLITSIVGPLMTAKFAPKIPIPNTLSSLTEDLDDPEENGAVTLIPPKASTFTVLVPTQNPQTLSYLLEMGALIARHESGVVIPLAIAKAPVHMDDPGLTSRLARNELLLQQATELATNLKVDAHPALRIDDDVARAISHTAREKNADLIIMGWSQQTLGLRAKLFGSTIDSVFWSAHCPVAVMRLLSDPRSFHRILFPIKNLTPQTLELFQFTQRLAETNGAIVTLLHVCPHNTSPQQVQAFKTEMERFLNQCRATADYPIKVICHDDAAKVLVRVSHTFDLVVLRSFRRRSVGGVALGEVTDKILREITSSFVLFGDPYA.

The next 12 helical transmembrane spans lie at Ser10–Phe30, Leu35–Val55, Leu65–Val85, Leu100–Phe120, Asn121–Val141, Ile156–Ile176, Ala184–Phe204, Gln222–Val242, Leu275–Val295, Leu300–Ile320, Gly333–Ala353, and Val370–Ala390.

Belongs to the monovalent cation:proton antiporter 2 (CPA2) transporter (TC 2.A.37) family.

The protein localises to the membrane. In terms of biological role, na(+)/H(+) antiporter. This chain is Na(+)/H(+) antiporter NhaS5 (nhaS5), found in Synechocystis sp. (strain ATCC 27184 / PCC 6803 / Kazusa).